A 166-amino-acid polypeptide reads, in one-letter code: Phosphopantetheine adenylyltransferase (166 aa).

Ser-8 lines the substrate pocket. ATP is bound by residues 8–9 and His-16; that span reads SF. Lys-40, Thr-72, and Arg-86 together coordinate substrate. Residues 87-89, Glu-97, and 122-128 contribute to the ATP site; these read GLR and YSFLSSS.

Belongs to the bacterial CoaD family. Homohexamer. The cofactor is Mg(2+).

Its subcellular location is the cytoplasm. It carries out the reaction (R)-4'-phosphopantetheine + ATP + H(+) = 3'-dephospho-CoA + diphosphate. It participates in cofactor biosynthesis; coenzyme A biosynthesis; CoA from (R)-pantothenate: step 4/5. Its function is as follows. Reversibly transfers an adenylyl group from ATP to 4'-phosphopantetheine, yielding dephospho-CoA (dPCoA) and pyrophosphate. The polypeptide is Phosphopantetheine adenylyltransferase (Synechococcus elongatus (strain ATCC 33912 / PCC 7942 / FACHB-805) (Anacystis nidulans R2)).